The sequence spans 283 residues: Non-selective voltage-gated ion channel VDAC3 (283 aa).

An N-acetylcysteine modification is found at Cys2. Thr4 is modified (phosphothreonine). N6-acetyllysine occurs at positions 12, 15, and 20. The next 2 membrane-spanning stretches (beta stranded) occupy residues 26 to 35 (MVKIDLRTKS) and 39 to 47 (VEFSTSGHA). A Glycyl lysine isopeptide (Lys-Gly) (interchain with G-Cter in ubiquitin) cross-link involves residue Lys53. 3 beta stranded membrane passes run 54-64 (ASGNLETKYKI), 69-76 (LTFTQKWN), and 80-89 (TLGTEISLEN). Residue Lys90 is modified to N6-acetyllysine. A beta stranded transmembrane segment spans residues 95-104 (LKLTLDTIFV). Glycyl lysine isopeptide (Lys-Gly) (interchain with G-Cter in ubiquitin) cross-links involve residues Lys109 and Lys110. Beta stranded transmembrane passes span 111–120 (SGKLKASYKR), 123–130 (FSIGSNVD), 137–145 (TIYGWAVLA), 150–158 (LAGYQMSFD), 163–175 (KLSQNNFALGYKA), 178–185 (FQLHTHVN), 189–198 (EFGGSIYQKV), 202–211 (IETSINLAWT), 218–227 (RFGIAAKYKL), and 231–238 (TSLSAKVN). At Ser241 the chain carries Phosphoserine. Residues 242-244 (LIG) and 260-264 (SALID) contribute to the NAD(+) site. Transmembrane regions (beta stranded) follow at residues 242 to 251 (LIGLGYTQTL) and 254 to 263 (GVKLTLSALI). Lys266 is subject to N6-acetyllysine; alternate. A Glycyl lysine isopeptide (Lys-Gly) (interchain with G-Cter in ubiquitin); alternate cross-link involves residue Lys266. Residues 273-282 (HKVGLGFELE) form a beta stranded membrane-spanning segment.

The protein belongs to the eukaryotic mitochondrial porin family. Interacts with ARMC12 in a TBC1D21-dependent manner. Interacts with MISFA. In terms of processing, ubiquitinated by PRKN during mitophagy, leading to its degradation and enhancement of mitophagy. Deubiquitinated by USP30.

Its subcellular location is the mitochondrion outer membrane. The protein localises to the membrane. It carries out the reaction chloride(in) = chloride(out). The enzyme catalyses K(+)(in) = K(+)(out). Its function is as follows. Non-selective voltage-gated ion channel that mediates the transport of anions and cations through the mitochondrion outer membrane and plasma membrane. Forms a high-conducting channel with a stable open state and a voltage-induced closure with a mild preference for anions over cations. Involved in male fertility and sperm mitochondrial sheath formation. This chain is Non-selective voltage-gated ion channel VDAC3, found in Sus scrofa (Pig).